The following is a 219-amino-acid chain: Protein Ac132 (219 aa).

Residues 1 to 34 (MSDKTPTKKGGSHAMTLRERGVTKPPKKSEKLQQ) are disordered. Basic and acidic residues predominate over residues 16 to 33 (TLRERGVTKPPKKSEKLQ). An NEBU-like domain region spans residues 103–134 (YPMAYFVNTDYKLKLECARIRSDLLYKNKNEV).

As to quaternary structure, interacts with viral envelope protein E18 and the DNA-binding protein p6.9.

It is found in the host cytoplasm. It localises to the host nucleus. The protein localises to the virion. In terms of biological role, plays an essential role in nucleocapsid entry in host nucleus. May act by binding and stabilizing F-actin in the infected cell, which might attach to nucleocapsids and then push the nucleocapsids into the nucleus. This chain is Protein Ac132 (Ac132), found in Autographa californica nuclear polyhedrosis virus (AcMNPV).